Reading from the N-terminus, the 182-residue chain is Isopentenyl-diphosphate Delta-isomerase (182 aa).

Mn(2+)-binding residues include His-25 and His-32. A Nudix hydrolase domain is found at 30–164; it reads LLHLAFSSWL…PWAFSPWMVM (135 aa). Cys-67 is a catalytic residue. A Mn(2+)-binding site is contributed by His-69. Residue Glu-87 coordinates Mg(2+). The Mn(2+) site is built by Glu-114 and Glu-116. Glu-116 is a catalytic residue.

Belongs to the IPP isomerase type 1 family. Homodimer. Mg(2+) serves as cofactor. Requires Mn(2+) as cofactor.

It localises to the cytoplasm. The enzyme catalyses isopentenyl diphosphate = dimethylallyl diphosphate. It functions in the pathway isoprenoid biosynthesis; dimethylallyl diphosphate biosynthesis; dimethylallyl diphosphate from isopentenyl diphosphate: step 1/1. Functionally, catalyzes the 1,3-allylic rearrangement of the homoallylic substrate isopentenyl (IPP) to its highly electrophilic allylic isomer, dimethylallyl diphosphate (DMAPP). This chain is Isopentenyl-diphosphate Delta-isomerase, found in Escherichia coli O17:K52:H18 (strain UMN026 / ExPEC).